We begin with the raw amino-acid sequence, 330 residues long: L-lactate dehydrogenase (330 aa).

NAD(+) is bound by residues V31, D52, K57, and 96 to 97; that span reads GA. Substrate-binding positions include Q99, R105, and 137-140; that span reads NPVD. Residues 135 to 137 and S160 each bind NAD(+); that span reads VSN. A substrate-binding site is contributed by 165 to 168; that stretch reads DTAR. Residues R170 and H185 each coordinate beta-D-fructose 1,6-bisphosphate. The active-site Proton acceptor is the H192. The residue at position 238 (Y238) is a Phosphotyrosine. A substrate-binding site is contributed by T247.

Belongs to the LDH/MDH superfamily. LDH family. In terms of assembly, homotetramer.

It localises to the cytoplasm. The enzyme catalyses (S)-lactate + NAD(+) = pyruvate + NADH + H(+). Its pathway is fermentation; pyruvate fermentation to lactate; (S)-lactate from pyruvate: step 1/1. Allosterically activated by fructose 1,6-bisphosphate (FBP). Its function is as follows. Catalyzes the conversion of lactate to pyruvate. This Gloeobacter violaceus (strain ATCC 29082 / PCC 7421) protein is L-lactate dehydrogenase.